A 293-amino-acid polypeptide reads, in one-letter code: Formamidopyrimidine-DNA glycosylase (293 aa).

Pro2 (schiff-base intermediate with DNA) is an active-site residue. Glu3 acts as the Proton donor in catalysis. Lys58 (proton donor; for beta-elimination activity) is an active-site residue. DNA is bound by residues His104, Arg123, and Lys166. The segment at 257–293 adopts an FPG-type zinc-finger fold; the sequence is AAYDREGERCRTDGCGGAVKRFVQNGRSTFWCSGCQK. The active-site Proton donor; for delta-elimination activity is the Arg283.

Belongs to the FPG family. As to quaternary structure, monomer. Zn(2+) is required as a cofactor.

The catalysed reaction is Hydrolysis of DNA containing ring-opened 7-methylguanine residues, releasing 2,6-diamino-4-hydroxy-5-(N-methyl)formamidopyrimidine.. The enzyme catalyses 2'-deoxyribonucleotide-(2'-deoxyribose 5'-phosphate)-2'-deoxyribonucleotide-DNA = a 3'-end 2'-deoxyribonucleotide-(2,3-dehydro-2,3-deoxyribose 5'-phosphate)-DNA + a 5'-end 5'-phospho-2'-deoxyribonucleoside-DNA + H(+). Involved in base excision repair of DNA damaged by oxidation or by mutagenic agents. Acts as a DNA glycosylase that recognizes and removes damaged bases. Has a preference for oxidized purines, such as 7,8-dihydro-8-oxoguanine (8-oxoG). Has AP (apurinic/apyrimidinic) lyase activity and introduces nicks in the DNA strand. Cleaves the DNA backbone by beta-delta elimination to generate a single-strand break at the site of the removed base with both 3'- and 5'-phosphates. This Rhodopseudomonas palustris (strain BisB5) protein is Formamidopyrimidine-DNA glycosylase.